The primary structure comprises 666 residues: Frizzled-3 (666 aa).

The signal sequence occupies residues 1-22 (MAMTWIVFSLWPLTVFMGHIGG). One can recognise an FZ domain in the interval 23–136 (HSLFSCEPIT…CSRFPDCDEP (114 aa)). Topologically, residues 23–205 (HSLFSCEPIT…REELSFARYF (183 aa)) are extracellular. 5 disulfides stabilise this stretch: cysteine 28-cysteine 89, cysteine 36-cysteine 82, cysteine 73-cysteine 110, cysteine 99-cysteine 133, and cysteine 103-cysteine 127. A glycan (N-linked (GlcNAc...) asparagine) is linked at asparagine 42. Residues 206–226 (IGLISIICLSATLFTFLTFLI) form a helical membrane-spanning segment. Residues 227 to 237 (DVTRFRYPERP) lie on the Cytoplasmic side of the membrane. A helical membrane pass occupies residues 238-258 (IIFYAVCYMMVSLIFFIGFLL). The Extracellular portion of the chain corresponds to 259-288 (EDRVACNASIPAQYKASTVTQGSHNKACTM). Asparagine 265 is a glycosylation site (N-linked (GlcNAc...) asparagine). Residues 289–309 (LFMILYFFTMAGSVWWVILTI) traverse the membrane as a helical segment. The Cytoplasmic segment spans residues 310 to 328 (TWFLAAVPKWGSEAIEKKA). Residues 329 to 349 (LLFHASAWGIPGTLTIILLAM) form a helical membrane-spanning segment. At 350 to 374 (NKIEGDNISGVCFVGLYDVDALRYF) the chain is on the extracellular side. An N-linked (GlcNAc...) asparagine glycan is attached at asparagine 356. The chain crosses the membrane as a helical span at residues 375–395 (VLAPLCLYVVVGVSLLLAGII). The Cytoplasmic portion of the chain corresponds to 396–420 (SLNRVRIEIPLEKENQDKLVKFMIR). A helical membrane pass occupies residues 421 to 441 (IGVFSILYLVPLLVVIGCYFY). The Extracellular segment spans residues 442–477 (EQAYRGIWETTWIQERCREYHIPCPYQVTQMSRPDL). A helical transmembrane segment spans residues 478 to 498 (ILFLMKYLMALIVGIPSVFWV). The Cytoplasmic portion of the chain corresponds to 499 to 666 (GSKKTCFEWA…RVIEEDGTSA (168 aa)). A Lys-Thr-X-X-X-Trp motif, mediates interaction with the PDZ domain of Dvl family members motif is present at residues 502–507 (KTCFEW). Residues 538-666 (RDPNTPIIRK…RVIEEDGTSA (129 aa)) form a disordered region. Positions 550 to 565 (GTSTQGTSTHASSTQL) are enriched in polar residues. Residues 617-638 (LTDHSRHSSSHRLNEQSRHSSI) show a composition bias toward basic and acidic residues. Polar residues predominate over residues 639–656 (RDLSNNPMTHITHGTSMN).

This sequence belongs to the G-protein coupled receptor Fz/Smo family. As to quaternary structure, interacts with VANGL2. Ubiquitinated by ZNRF3, leading to its degradation by the proteasome. In terms of tissue distribution, widely expressed. Relatively high expression in the CNS, including regions of the limbic system, in kidney, pancreas, skeletal muscle, uterus and testis.

The protein localises to the membrane. It is found in the cell membrane. Its subcellular location is the cell surface. The protein resides in the apical cell membrane. Its function is as follows. Receptor for Wnt proteins. Most of frizzled receptors are coupled to the beta-catenin canonical signaling pathway, which leads to the activation of disheveled proteins, inhibition of GSK-3 kinase, nuclear accumulation of beta-catenin and activation of Wnt target genes. A second signaling pathway involving PKC and calcium fluxes has been seen for some family members, but it is not yet clear if it represents a distinct pathway or if it can be integrated in the canonical pathway, as PKC seems to be required for Wnt-mediated inactivation of GSK-3 kinase. Both pathways seem to involve interactions with G-proteins. Activation by Wnt5A stimulates PKC activity via a G-protein-dependent mechanism. Involved in transduction and intercellular transmission of polarity information during tissue morphogenesis and/or in differentiated tissues. Plays a role in controlling early axon growth and guidance processes necessary for the formation of a subset of central and peripheral major fiber tracts. Required for the development of major fiber tracts in the central nervous system, including: the anterior commissure, the corpus callosum, the thalamocortical, corticothalamic and nigrostriatal tracts, the corticospinal tract, the fasciculus retroflexus, the mammillothalamic tract, the medial lemniscus, and ascending fiber tracts from the spinal cord to the brain. In the peripheral nervous system, controls axon growth in distinct populations of cranial and spinal motor neurons, including the facial branchimotor nerve, the hypoglossal nerve, the phrenic nerve, and motor nerves innervating dorsal limbs. Involved in the migration of cranial neural crest cells. May also be implicated in the transmission of sensory information from the trunk and limbs to the brain. Controls commissural sensory axons guidance after midline crossing along the anterior-posterior axis in the developing spinal cord in a Wnt-dependent signaling pathway. Together with FZD6, is involved in the neural tube closure and plays a role in the regulation of the establishment of planar cell polarity (PCP), particularly in the orientation of asymmetric bundles of stereocilia on the apical faces of a subset of auditory and vestibular sensory cells located in the inner ear. Promotes neurogenesis by maintaining sympathetic neuroblasts within the cell cycle in a beta-catenin-dependent manner. This Homo sapiens (Human) protein is Frizzled-3 (FZD3).